The primary structure comprises 337 residues: Neurogenic differentiation factor 6 (337 aa).

Positions 43 to 82 (LRGKSIKRAPGEETEKEEEEEDREEEDENGLPRRRGLRKK) are disordered. The segment covering 54–71 (EETEKEEEEEDREEEDEN) has biased composition (acidic residues). The short motif at 80-86 (RKKKTTK) is the Nuclear localization signal element. Positions 94–146 (FRRQEANARERNRMHGLNDALDNLRKVVPCYSKTQKLSKIETLRLAKNYIWAL) constitute a bHLH domain.

In terms of assembly, efficient DNA binding requires dimerization with another bHLH protein.

The protein localises to the nucleus. In terms of biological role, activates E box-dependent transcription in collaboration with TCF3/E47. May be a trans-acting factor involved in the development and maintenance of the mammalian nervous system. Transactivates the promoter of its own gene. The polypeptide is Neurogenic differentiation factor 6 (NEUROD6) (Homo sapiens (Human)).